We begin with the raw amino-acid sequence, 755 residues long: ABC transporter G family member 2 (755 aa).

The 261-residue stretch at 98 to 358 folds into the ABC transporter domain; sequence LSFTDLTYSV…FSEFKHPIPE (261 aa). 151–158 serves as a coordination point for ATP; sequence GASGSGKS. The ABC transmembrane type-2 domain maps to 449 to 659; it reads IEMIVIGKRA…PYEGVLQNEF (211 aa). 6 helical membrane passes run 468 to 488, 503 to 523, 552 to 572, 579 to 599, 609 to 629, and 728 to 748; these read LLGM…TMFT, FFAF…PVFL, IPAL…AVGL, FFFF…FVTF, LGFT…GFFI, and LWIT…TLLI.

Belongs to the ABC transporter superfamily. ABCG family. Eye pigment precursor importer (TC 3.A.1.204) subfamily.

It localises to the membrane. This is ABC transporter G family member 2 (ABCG2) from Arabidopsis thaliana (Mouse-ear cress).